Reading from the N-terminus, the 266-residue chain is Proteasome subunit beta type-7 (266 aa).

A propeptide spanning residues Met1–Asn33 is cleaved from the precursor.

The protein belongs to the peptidase T1B family. In terms of assembly, the 26S proteasome consists of a 20S proteasome core and two 19S regulatory subunits. The 20S proteasome core is composed of 28 subunits that are arranged in four stacked rings, resulting in a barrel-shaped structure. The two end rings are each formed by seven alpha subunits, and the two central rings are each formed by seven beta subunits. The catalytic chamber with the active sites is on the inside of the barrel. Interacts with CIC1.

The protein resides in the cytoplasm. Its subcellular location is the nucleus. Non-catalytic component of the proteasome which degrades poly-ubiquitinated proteins in the cytoplasm and in the nucleus. It is essential for the regulated turnover of proteins and for the removal of misfolded proteins. The proteasome is a multicatalytic proteinase complex that is characterized by its ability to cleave peptides with Arg, Phe, Tyr, Leu, and Glu adjacent to the leaving group at neutral or slightly basic pH. It has an ATP-dependent proteolytic activity. PRE3 and PRE4 are necessary for the peptidyl-glutamyl-peptide-hydrolyzing activity. The polypeptide is Proteasome subunit beta type-7 (PRE4) (Saccharomyces cerevisiae (strain ATCC 204508 / S288c) (Baker's yeast)).